The primary structure comprises 252 residues: Diphthine synthase (252 aa).

Residues leucine 9, aspartate 85, valine 88, serine 113 to isoleucine 114, leucine 165, alanine 202, and histidine 227 each bind S-adenosyl-L-methionine.

This sequence belongs to the diphthine synthase family. As to quaternary structure, homodimer.

The enzyme catalyses 2-[(3S)-amino-3-carboxypropyl]-L-histidyl-[translation elongation factor 2] + 3 S-adenosyl-L-methionine = diphthine-[translation elongation factor 2] + 3 S-adenosyl-L-homocysteine + 3 H(+). It participates in protein modification; peptidyl-diphthamide biosynthesis. In terms of biological role, S-adenosyl-L-methionine-dependent methyltransferase that catalyzes the trimethylation of the amino group of the modified target histidine residue in translation elongation factor 2 (EF-2), to form an intermediate called diphthine. The three successive methylation reactions represent the second step of diphthamide biosynthesis. The chain is Diphthine synthase from Methanospirillum hungatei JF-1 (strain ATCC 27890 / DSM 864 / NBRC 100397 / JF-1).